Reading from the N-terminus, the 472-residue chain is Sarcalumenin (472 aa).

The N-terminal stretch at 1 to 20 is a signal peptide; sequence MKRLNLLCCCVASLLLLGTA. The N-linked (GlcNAc...) asparagine glycan is linked to Leu59. The 242-residue stretch at 89 to 330 folds into the Dynamin-type G domain; sequence ITSKPMVLFL…IENRMENKIA (242 aa). Positions 99 to 106 are G1 motif; sequence GPWSVGKS. Residues 127–128 are G2 motif; that stretch reads EP. Residues 189 to 192 form a G3 motif region; it reads DTPG. Positions 254 to 257 are G4 motif; it reads NKAD. A region of interest (G5 motif) is located at residue Leu278. 2 N-linked (GlcNAc...) asparagine glycosylation sites follow: Asn280 and Asn388.

This sequence belongs to the TRAFAC class dynamin-like GTPase superfamily. Dynamin/Fzo/YdjA family. In terms of processing, N-glycosylated.

The protein resides in the sarcoplasmic reticulum lumen. It is found in the sarcoplasmic reticulum membrane. The chain is Sarcalumenin (SRL) from Gallus gallus (Chicken).